Consider the following 374-residue polypeptide: Ribosomal RNA large subunit methyltransferase G (374 aa).

The protein belongs to the methyltransferase superfamily. RlmG family.

It localises to the cytoplasm. It carries out the reaction guanosine(1835) in 23S rRNA + S-adenosyl-L-methionine = N(2)-methylguanosine(1835) in 23S rRNA + S-adenosyl-L-homocysteine + H(+). Functionally, specifically methylates the guanine in position 1835 (m2G1835) of 23S rRNA. The protein is Ribosomal RNA large subunit methyltransferase G of Pseudomonas aeruginosa (strain ATCC 15692 / DSM 22644 / CIP 104116 / JCM 14847 / LMG 12228 / 1C / PRS 101 / PAO1).